The following is a 316-amino-acid chain: MSPDNKLLPKRIILVRHGESEGNLDTAAYTTTPDHKIQLTDSGLLQAQEAGARLHALISSNPSSPEWRVYFYVSPYDRTRSTLREIGRSFSRRRVIGVREECRIREQDFGNFQVKERMRATKKVRERFGRFFYRFPEGESAADVFDRVSSFLESLWRDIDMNRLHINPSHELNFVIVSHGLTSRVFLMKWFKWSVEQFEGLNNPGNSEIRVMELGQGGDYSLAIHHTEEELATWGLSPEMIADQKWRANAHKGEWKEDCKWYFGDFFDHMADSDKECETEATEDREEEEEEEGKRVNLLTSSEYSNEPELYNGQCC.

The Tele-phosphohistidine intermediate role is filled by His17. Glu106 functions as the Proton donor/acceptor in the catalytic mechanism. Residues 275-316 (KECETEATEDREEEEEEEGKRVNLLTSSEYSNEPELYNGQCC) are disordered. A compositionally biased stretch (acidic residues) spans 279–291 (TEATEDREEEEEE).

The protein belongs to the phosphoglycerate mutase family. In terms of tissue distribution, expressed in roots, leaves, stems, flowers and siliques.

Functionally, phosphoglycerate mutase-like protein lacking PGM activity. May play a role in carbohydrates metabolism. The sequence is that of Phosphoglycerate mutase-like protein AT74 from Arabidopsis thaliana (Mouse-ear cress).